Here is a 563-residue protein sequence, read N- to C-terminus: Arginine--tRNA ligase (563 aa).

The 'HIGH' region motif lies at 121 to 131 (PNIAKPFSIGH).

This sequence belongs to the class-I aminoacyl-tRNA synthetase family. Monomer.

It localises to the cytoplasm. It carries out the reaction tRNA(Arg) + L-arginine + ATP = L-arginyl-tRNA(Arg) + AMP + diphosphate. The sequence is that of Arginine--tRNA ligase from Streptococcus pyogenes serotype M2 (strain MGAS10270).